Reading from the N-terminus, the 538-residue chain is MEIKEISVPQQGVVADYMNGKKEIQSCFDYMLTEDAFKQRVQDLREREFFRQDLVTHLLEYNTKLQAGEATIQNVKALGDENTYVVIAGQQAGLLTGPLYTIHKIISVLQLAKEKEESLGVKVVPVFWIAGEDHDMDEINHTFVTKNKKIKKTIFHDRNPKKASASESELSLEDCRKWIEEIFKTYPETNFTKDVLQFIDDSLRKSNTYVDFFGHLIMKMFVNSGLILVDSHHPELRKLEVPFFKQIVSKYKEVQEGLHNQQRVIKELGYKPIIETKSNAVHIFMEIDNERVLLEDNQGKFVGKDGTYSFSYKELIEEMERSPERFSNNVVTRPLMQEYVFPTLAFIGGPGELAYWSELQQVFHTIGFRMPPVVPRITITYIERDIATDLHDLQLQESDPFFNNVDKLRENWLSNQIEEPIDERFVEAKKEIIDIHKSLQQFVKKIDPGLSAFAGKNEFKINEQIELLERMLKRNVEKKHEVELNKFRRIQFALRPLGAPQERVWNVCYYLNQFGLDFVDRVMEKPFSWNGKHHVIKL.

A coiled-coil region spans residues 460–484 (KINEQIELLERMLKRNVEKKHEVEL).

The protein belongs to the BshC family.

Its function is as follows. Involved in bacillithiol (BSH) biosynthesis. May catalyze the last step of the pathway, the addition of cysteine to glucosamine malate (GlcN-Mal) to generate BSH. The polypeptide is Putative cysteine ligase BshC (Bacillus anthracis (strain A0248)).